We begin with the raw amino-acid sequence, 239 residues long: MGKSLIQQRRGKGSPTFKSPSHRFRGAVKYIPLNYTQEKTLRGVVEEIMHDPGRTAPVARVKFENGIEKLIIAPEGLLVGQEIYIGPDAPIAVGNTLPLAKIPEGTYVYNIEGIPGDGGKYVRAGGTYALVVSREPDKVIVQLPSGELKAFNPMCRATIGVVAGGGRLEKPLVKAGKAYYKYKARNKFWPTPRGVKMNAVNHPFGGKEHHPGKPTTTSRRAPPGRKVGHIAARRTGRRK.

2 disordered regions span residues 1-21 (MGKS…KSPS) and 203-239 (PFGG…GRRK). Basic residues predominate over residues 222 to 239 (PPGRKVGHIAARRTGRRK).

The protein belongs to the universal ribosomal protein uL2 family. As to quaternary structure, part of the 50S ribosomal subunit. Forms a bridge to the 30S subunit in the 70S ribosome.

One of the primary rRNA binding proteins. Required for association of the 30S and 50S subunits to form the 70S ribosome, for tRNA binding and peptide bond formation. It has been suggested to have peptidyltransferase activity; this is somewhat controversial. Makes several contacts with the 16S rRNA in the 70S ribosome. In Pyrococcus furiosus (strain ATCC 43587 / DSM 3638 / JCM 8422 / Vc1), this protein is Large ribosomal subunit protein uL2.